Consider the following 339-residue polypeptide: Dihydroorotate dehydrogenase (quinone) (339 aa).

FMN is bound by residues Ala64 to Lys68 and Thr88. Substrate is bound at residue Lys68. Asn113 to Phe117 is a binding site for substrate. FMN-binding residues include Asn141 and Asn174. Residue Asn174 participates in substrate binding. Ser177 acts as the Nucleophile in catalysis. Asn179 is a binding site for substrate. Residues Lys219 and Thr247 each contribute to the FMN site. Asn248–Thr249 contributes to the substrate binding site. FMN contacts are provided by residues Gly270, Gly299, and Tyr320–Ser321.

It belongs to the dihydroorotate dehydrogenase family. Type 2 subfamily. As to quaternary structure, monomer. FMN serves as cofactor.

It localises to the cell membrane. It catalyses the reaction (S)-dihydroorotate + a quinone = orotate + a quinol. The protein operates within pyrimidine metabolism; UMP biosynthesis via de novo pathway; orotate from (S)-dihydroorotate (quinone route): step 1/1. In terms of biological role, catalyzes the conversion of dihydroorotate to orotate with quinone as electron acceptor. This chain is Dihydroorotate dehydrogenase (quinone), found in Haemophilus influenzae (strain PittGG).